The primary structure comprises 145 residues: Aspartate 1-decarboxylase (145 aa).

The active-site Schiff-base intermediate with substrate; via pyruvic acid is Ser26. Ser26 is modified (pyruvic acid (Ser)). Thr58 provides a ligand contact to substrate. Residue Tyr59 is the Proton donor of the active site. 74-76 is a substrate binding site; sequence GGA.

It belongs to the PanD family. As to quaternary structure, heterooctamer of four alpha and four beta subunits. Pyruvate is required as a cofactor. Is synthesized initially as an inactive proenzyme, which is activated by self-cleavage at a specific serine bond to produce a beta-subunit with a hydroxyl group at its C-terminus and an alpha-subunit with a pyruvoyl group at its N-terminus.

It is found in the cytoplasm. It catalyses the reaction L-aspartate + H(+) = beta-alanine + CO2. The protein operates within cofactor biosynthesis; (R)-pantothenate biosynthesis; beta-alanine from L-aspartate: step 1/1. Catalyzes the pyruvoyl-dependent decarboxylation of aspartate to produce beta-alanine. The sequence is that of Aspartate 1-decarboxylase from Synechocystis sp. (strain ATCC 27184 / PCC 6803 / Kazusa).